Here is a 192-residue protein sequence, read N- to C-terminus: Probable cobalt-precorrin-6B C(15)-methyltransferase (decarboxylating) (192 aa).

S-adenosyl-L-methionine contacts are provided by residues T20, 44 to 48, E68, and A96; that span reads GSGTG.

The protein belongs to the methyltransferase superfamily. Archaeal-type CbiT family.

The enzyme catalyses Co-precorrin-6B + S-adenosyl-L-methionine = Co-precorrin-7 + S-adenosyl-L-homocysteine + CO2. Its pathway is cofactor biosynthesis; adenosylcobalamin biosynthesis; cob(II)yrinate a,c-diamide from sirohydrochlorin (anaerobic route): step 8/10. Its function is as follows. Catalyzes the methylation of C-15 in cobalt-precorrin-6B followed by the decarboxylation of C-12 to form cobalt-precorrin-7. In Sulfolobus acidocaldarius (strain ATCC 33909 / DSM 639 / JCM 8929 / NBRC 15157 / NCIMB 11770), this protein is Probable cobalt-precorrin-6B C(15)-methyltransferase (decarboxylating).